A 233-amino-acid polypeptide reads, in one-letter code: Octanoyltransferase (233 aa).

The region spanning 33-216 (GRAQDTVILL…HLVRALSSNG (184 aa)) is the BPL/LPL catalytic domain. Residues 71–78 (RGGRITWH), 146–148 (AIG), and 159–161 (GFA) contribute to the substrate site. The active-site Acyl-thioester intermediate is the Cys177.

Belongs to the LipB family.

The protein localises to the cytoplasm. It carries out the reaction octanoyl-[ACP] + L-lysyl-[protein] = N(6)-octanoyl-L-lysyl-[protein] + holo-[ACP] + H(+). It functions in the pathway protein modification; protein lipoylation via endogenous pathway; protein N(6)-(lipoyl)lysine from octanoyl-[acyl-carrier-protein]: step 1/2. Its function is as follows. Catalyzes the transfer of endogenously produced octanoic acid from octanoyl-acyl-carrier-protein onto the lipoyl domains of lipoate-dependent enzymes. Lipoyl-ACP can also act as a substrate although octanoyl-ACP is likely to be the physiological substrate. The polypeptide is Octanoyltransferase (Clavibacter michiganensis subsp. michiganensis (strain NCPPB 382)).